The following is a 456-amino-acid chain: Probable serine/threonine-protein kinase DDB_G0277449 (456 aa).

The segment covering Ser-50–Asp-83 has biased composition (low complexity). Residues Ser-50–Ser-84 are disordered. Residues Phe-128 to Phe-383 enclose the Protein kinase domain. ATP contacts are provided by residues Val-134–Val-142 and Lys-157. Residue Asp-251 is the Proton acceptor of the active site. Residues Lys-384–Gln-455 form the AGC-kinase C-terminal domain.

Belongs to the protein kinase superfamily. AGC Ser/Thr protein kinase family.

It catalyses the reaction L-seryl-[protein] + ATP = O-phospho-L-seryl-[protein] + ADP + H(+). The enzyme catalyses L-threonyl-[protein] + ATP = O-phospho-L-threonyl-[protein] + ADP + H(+). This chain is Probable serine/threonine-protein kinase DDB_G0277449, found in Dictyostelium discoideum (Social amoeba).